A 356-amino-acid polypeptide reads, in one-letter code: Histidinol-phosphate aminotransferase (356 aa).

K208 carries the N6-(pyridoxal phosphate)lysine modification.

This sequence belongs to the class-II pyridoxal-phosphate-dependent aminotransferase family. Histidinol-phosphate aminotransferase subfamily. In terms of assembly, homodimer. Requires pyridoxal 5'-phosphate as cofactor.

The catalysed reaction is L-histidinol phosphate + 2-oxoglutarate = 3-(imidazol-4-yl)-2-oxopropyl phosphate + L-glutamate. Its pathway is amino-acid biosynthesis; L-histidine biosynthesis; L-histidine from 5-phospho-alpha-D-ribose 1-diphosphate: step 7/9. The protein is Histidinol-phosphate aminotransferase of Lactococcus lactis subsp. cremoris (strain SK11).